Reading from the N-terminus, the 204-residue chain is ATP phosphoribosyltransferase (204 aa).

Belongs to the ATP phosphoribosyltransferase family. Short subfamily. Heteromultimer composed of HisG and HisZ subunits.

The protein localises to the cytoplasm. It carries out the reaction 1-(5-phospho-beta-D-ribosyl)-ATP + diphosphate = 5-phospho-alpha-D-ribose 1-diphosphate + ATP. It functions in the pathway amino-acid biosynthesis; L-histidine biosynthesis; L-histidine from 5-phospho-alpha-D-ribose 1-diphosphate: step 1/9. Catalyzes the condensation of ATP and 5-phosphoribose 1-diphosphate to form N'-(5'-phosphoribosyl)-ATP (PR-ATP). Has a crucial role in the pathway because the rate of histidine biosynthesis seems to be controlled primarily by regulation of HisG enzymatic activity. In Staphylococcus aureus (strain Mu3 / ATCC 700698), this protein is ATP phosphoribosyltransferase.